The following is an 89-amino-acid chain: Small ribosomal subunit protein uS15 (89 aa).

Belongs to the universal ribosomal protein uS15 family. As to quaternary structure, part of the 30S ribosomal subunit. Forms a bridge to the 50S subunit in the 70S ribosome, contacting the 23S rRNA.

Its function is as follows. One of the primary rRNA binding proteins, it binds directly to 16S rRNA where it helps nucleate assembly of the platform of the 30S subunit by binding and bridging several RNA helices of the 16S rRNA. Forms an intersubunit bridge (bridge B4) with the 23S rRNA of the 50S subunit in the ribosome. In Vibrio vulnificus (strain YJ016), this protein is Small ribosomal subunit protein uS15.